A 356-amino-acid polypeptide reads, in one-letter code: DNA polymerase IV (356 aa).

The region spanning 4–185 (IIHIDMDCYY…LALGKIPGVG (182 aa)) is the UmuC domain. Positions 8 and 103 each coordinate Mg(2+). The active site involves Glu104.

The protein belongs to the DNA polymerase type-Y family. In terms of assembly, monomer. It depends on Mg(2+) as a cofactor.

The protein localises to the cytoplasm. It carries out the reaction DNA(n) + a 2'-deoxyribonucleoside 5'-triphosphate = DNA(n+1) + diphosphate. In terms of biological role, poorly processive, error-prone DNA polymerase involved in untargeted mutagenesis. Copies undamaged DNA at stalled replication forks, which arise in vivo from mismatched or misaligned primer ends. These misaligned primers can be extended by PolIV. Exhibits no 3'-5' exonuclease (proofreading) activity. May be involved in translesional synthesis, in conjunction with the beta clamp from PolIII. This is DNA polymerase IV from Pseudoalteromonas atlantica (strain T6c / ATCC BAA-1087).